The primary structure comprises 139 residues: Angiogenin (139 aa).

Residues 1–21 (MAMSSLWWTAILLLALTVSMC) form the signal peptide. The active-site Proton acceptor is H34. Cystine bridges form between C49-C102, C64-C111, and C82-C126. Residues C102 and V122 each coordinate tRNA. H133 functions as the Proton donor in the catalytic mechanism.

Belongs to the pancreatic ribonuclease family. As to quaternary structure, homodimer. Interacts with RNH1; inhibiting ANG ribonuclease activity.

The protein localises to the secreted. It is found in the nucleus. The protein resides in the nucleolus. Its subcellular location is the cytoplasm. It localises to the stress granule. Its function is as follows. Secreted ribonuclease that can either promote or restrict cell proliferation of target cells, depending on the context. Endocytosed in target cells via its receptor PLXNB2 and translocates to the cytoplasm or nucleus. Under stress conditions, localizes to the cytoplasm and promotes the assembly of stress granules (SGs): specifically cleaves a subset of tRNAs within anticodon loops to produce tRNA-derived stress-induced fragments (tiRNAs), resulting in translation repression and inhibition of cell proliferation. tiRNas also prevent formation of apoptosome, thereby promoting cell survival. Preferentially cleaves RNAs between a pyrimidine and an adenosine residue, suggesting that it cleaves the anticodon loop of tRNA(Ala) (32-UUAGCAU-38) after positions 33 and 36. Cleaves a subset of tRNAs, including tRNA(Ala), tRNA(Glu), tRNA(Gly), tRNA(Lys), tRNA(Val), tRNA(His), tRNA(Asp) and tRNA(Sec). Under growth conditions and in differentiated cells, translocates to the nucleus and stimulates ribosomal RNA (rRNA) transcription, including that containing the initiation site sequences of 45S rRNA, thereby promoting cell growth and proliferation. Angiogenin induces vascularization of normal and malignant tissues via its ability to promote rRNA transcription. In Gallus gallus (Chicken), this protein is Angiogenin (ANG).